The primary structure comprises 316 residues: Methionyl-tRNA formyltransferase (316 aa).

110–113 lines the (6S)-5,6,7,8-tetrahydrofolate pocket; it reads SLLP.

Belongs to the Fmt family.

The enzyme catalyses L-methionyl-tRNA(fMet) + (6R)-10-formyltetrahydrofolate = N-formyl-L-methionyl-tRNA(fMet) + (6S)-5,6,7,8-tetrahydrofolate + H(+). Attaches a formyl group to the free amino group of methionyl-tRNA(fMet). The formyl group appears to play a dual role in the initiator identity of N-formylmethionyl-tRNA by promoting its recognition by IF2 and preventing the misappropriation of this tRNA by the elongation apparatus. The polypeptide is Methionyl-tRNA formyltransferase (Bacillus licheniformis (strain ATCC 14580 / DSM 13 / JCM 2505 / CCUG 7422 / NBRC 12200 / NCIMB 9375 / NCTC 10341 / NRRL NRS-1264 / Gibson 46)).